Here is a 408-residue protein sequence, read N- to C-terminus: Substance-P receptor (408 aa).

Residues 1 to 32 (MNSNISAQNDSALNSTIQNGTKINQFIQPPWQ) are Extracellular-facing. N4, N9, N14, and N19 each carry an N-linked (GlcNAc...) asparagine glycan. A helical transmembrane segment spans residues 33–55 (IALWSVAYSIIVIVSLVGNIIVM). Residues 56–65 (WIIIAHKRMR) lie on the Cytoplasmic side of the membrane. The chain crosses the membrane as a helical span at residues 66–87 (TVTNYFLVNLAFAEASMSAFNT). The Extracellular segment spans residues 88–107 (VINFTYAIHNHWYYGLIYCK). C106 and C181 form a disulfide bridge. The chain crosses the membrane as a helical span at residues 108–129 (FHNFFPISAVFTSIYSMTAIAL). The Cytoplasmic portion of the chain corresponds to 130–149 (DRYMAIIHPLKPRLSATATK). A helical transmembrane segment spans residues 150–170 (IVICVIWSFSFCMAFPLGYYA). At 171–196 (DVYPMEGGDICYLNWPDSEENRKYEQ) the chain is on the extracellular side. Residues 197–221 (VYQVLVFCLIYILPLLVIGCAYTFI) traverse the membrane as a helical segment. Over 222 to 250 (GMTLWASEIPGDSSDRYHEQVVAKRKVVK) the chain is Cytoplasmic. A helical membrane pass occupies residues 251–272 (MMIVVVCTFAICWLPFHIFFLL). At 273-283 (QTLHEMTQKFY) the chain is on the extracellular side. Residues 284-308 (QQFYLAIMWLAMSSTMYNPIIYCCL) form a helical membrane-spanning segment. The Cytoplasmic segment spans residues 309 to 408 (NDRFRIGFKH…SSSFYSNNLA (100 aa)). C323 is lipidated: S-palmitoyl cysteine. Residues 366–408 (DEEAEENGKSSKRLSLDLTSNGSSRSVCKTMSDSSSFYSNNLA) are disordered. A compositionally biased stretch (polar residues) spans 382 to 408 (DLTSNGSSRSVCKTMSDSSSFYSNNLA).

This sequence belongs to the G-protein coupled receptor 1 family.

The protein resides in the cell membrane. Its function is as follows. This is a receptor for the tachykinin neuropeptide substance P. It is probably associated with G proteins that activate a phosphatidylinositol-calcium second messenger system. This Aquarana catesbeiana (American bullfrog) protein is Substance-P receptor (TACR1).